Consider the following 123-residue polypeptide: Fluoride-specific ion channel FluC (123 aa).

The next 4 membrane-spanning stretches (helical) occupy residues Leu5–Ile25, Phe29–Val49, Leu65–Phe85, and Ile94–Gly114. Residues Gly72 and Thr75 each contribute to the Na(+) site.

The protein belongs to the fluoride channel Fluc/FEX (TC 1.A.43) family.

It localises to the cell membrane. The enzyme catalyses fluoride(in) = fluoride(out). Its activity is regulated as follows. Na(+) is not transported, but it plays an essential structural role and its presence is essential for fluoride channel function. Functionally, fluoride-specific ion channel. Important for reducing fluoride concentration in the cell, thus reducing its toxicity. The sequence is that of Fluoride-specific ion channel FluC from Methanococcus aeolicus (strain ATCC BAA-1280 / DSM 17508 / OCM 812 / Nankai-3).